Here is a 393-residue protein sequence, read N- to C-terminus: tRNA (guanine-N(7)-)-methyltransferase (393 aa).

S-adenosyl-L-methionine is bound by residues E124, E149, and D176. D232 provides a ligand contact to substrate.

Belongs to the class I-like SAM-binding methyltransferase superfamily. TrmB family.

The catalysed reaction is guanosine(46) in tRNA + S-adenosyl-L-methionine = N(7)-methylguanosine(46) in tRNA + S-adenosyl-L-homocysteine. The protein operates within tRNA modification; N(7)-methylguanine-tRNA biosynthesis. Its function is as follows. Catalyzes the formation of N(7)-methylguanine at position 46 (m7G46) in tRNA. The protein is tRNA (guanine-N(7)-)-methyltransferase of Helicobacter pylori (strain HPAG1).